The sequence spans 187 residues: Protein canopy-1 (187 aa).

Residues 1–24 (MSPWIKHICLVLVAAFMLVKTTES) form the signal peptide. Residues 28-181 (EALYCSACMA…EVSDHCKSSV (154 aa)) enclose the Saposin B-type domain. 3 disulfides stabilise this stretch: C32–C177, C35–C170, and C90–C143. Residues 184-187 (HSEL) carry the Prevents secretion from ER motif.

It belongs to the canopy family. In terms of assembly, homodimer. Interacts with fgfr1.

Its subcellular location is the endoplasmic reticulum. Its function is as follows. Involved in the maintenance of the midbrain-hindbrain boundary (MHB) organizer. Contributes to a positive-feedback loop of FGF signaling in the MHB, enabling the MHB to exert its role as an organizer for the tectal and cerebellar development. The polypeptide is Protein canopy-1 (cnpy1) (Danio rerio (Zebrafish)).